Reading from the N-terminus, the 286-residue chain is Oxidoreductase clz15 (286 aa).

It belongs to the asaB hydroxylase/desaturase family.

Its pathway is secondary metabolite biosynthesis. Its function is as follows. Oxidoreductase; part of the gene cluster that mediates the biosynthesis of squalestatin S1 (SQS1, also known as zaragozic acid A), a heavily oxidized fungal polyketide that offers potent cholesterol lowering activity by targeting squalene synthase (SS). SQS1 is composed of a 2,8-dioxobicyclic[3.2.1]octane-3,4,5-tricarboxyclic acid core that is connected to two lipophilic polyketide arms. These initial steps feature the priming of an unusual benzoic acid starter unit onto the highly reducing polyketide synthase clz14, followed by oxaloacetate extension and product release to generate a tricarboxylic acid containing product. The phenylalanine ammonia lyase (PAL) clz10 and the acyl-CoA ligase clz12 are involved in transforming phenylalanine into benzoyl-CoA. The citrate synthase-like protein clz17 is involved in connecting the C-alpha-carbons of the hexaketide chain and oxaloacetate to afford the tricarboxylic acid unit. The potential hydrolytic enzymes, clz11 and clz13, are in close proximity to pks2 and may participate in product release. On the other side, the tetraketide arm is synthesized by a the squalestatin tetraketide synthase clz2 and enzymatically esterified to the core in the last biosynthetic step, by the acetyltransferase clz6. The biosynthesis of the tetraketide must involve 3 rounds of chain extension. After the first and second rounds methyl-transfer occurs, and in all rounds of extension the ketoreductase and dehydratase are active. The enoyl reductase and C-MeT of clz2 are not active in the final round of extension. The acetyltransferase clz6 appears to have a broad substrate selectivity for its acyl CoA substrate, allowing the in vitro synthesis of novel squalestatins. The biosynthesis of SQS1 requires several oxidative steps likely performed by oxidoreductases clz3, clz15 and clz16. Finally, in support of the identification of the cluster as being responsible for SQS1 production, the cluster contains a gene encoding a putative squalene synthase (SS) clz20, suggesting a likely mechanism for self-resistance. This chain is Oxidoreductase clz15, found in Cochliobolus lunatus (Filamentous fungus).